The chain runs to 50 residues: MYDEILSAFFEVNDELQSEARCGEKNDRCKTNQDCCSGFRCTKFRRCGRR.

3 disulfide bridges follow: Cys-22–Cys-36, Cys-29–Cys-41, and Cys-35–Cys-47.

Belongs to the neurotoxin 10 (Hwtx-1) family. 64 (Jztx-20) subfamily. As to expression, expressed by the venom gland.

Its subcellular location is the secreted. Its function is as follows. Probable ion channel inhibitor. In Chilobrachys guangxiensis (Chinese earth tiger tarantula), this protein is U23-theraphotoxin-Cg1a 2.